The sequence spans 548 residues: ATP synthase subunit alpha (548 aa).

Residue 172–179 (GDRKTGKT) participates in ATP binding.

Belongs to the ATPase alpha/beta chains family. As to quaternary structure, F-type ATPases have 2 components, CF(1) - the catalytic core - and CF(0) - the membrane proton channel. CF(1) has five subunits: alpha(3), beta(3), gamma(1), delta(1), epsilon(1). CF(0) has three main subunits: a(1), b(2) and c(9-12). The alpha and beta chains form an alternating ring which encloses part of the gamma chain. CF(1) is attached to CF(0) by a central stalk formed by the gamma and epsilon chains, while a peripheral stalk is formed by the delta and b chains.

It is found in the cell membrane. The enzyme catalyses ATP + H2O + 4 H(+)(in) = ADP + phosphate + 5 H(+)(out). Its function is as follows. Produces ATP from ADP in the presence of a proton gradient across the membrane. The alpha chain is a regulatory subunit. The chain is ATP synthase subunit alpha from Mycolicibacterium smegmatis (strain ATCC 700084 / mc(2)155) (Mycobacterium smegmatis).